The following is a 97-amino-acid chain: Peptide Y (97 aa).

A signal peptide spans 1–28 (MANMLRSWMMLAALAVCLLVCLSSFADA). Tyr64 carries the tyrosine amide modification. The propeptide at 68-97 (STPEQAVAWLLFGADSSQDAEPRLDYSDQW) is C-terminal extension.

The protein belongs to the NPY family.

It localises to the secreted. The polypeptide is Peptide Y (Dicentrarchus labrax (European seabass)).